Reading from the N-terminus, the 214-residue chain is uncharacterized protein (214 aa).

7 helical membrane-spanning segments follow: residues 4 to 23, 35 to 57, 67 to 89, 96 to 118, 128 to 150, 155 to 177, and 187 to 209; these read VSIV…FSSF, SFVH…LGYY, QWMR…FLFT, VSLV…VHVY, ARVM…VSFS, LPLL…SATV, and TVVY…FFAV.

It is found in the cell membrane. This is an uncharacterized protein from Treponema pallidum (strain Nichols).